Here is a 296-residue protein sequence, read N- to C-terminus: Phosphatidylcholine:diacylglycerol cholinephosphotransferase 2 (296 aa).

The next 5 membrane-spanning stretches (helical) occupy residues 83–103 (HWIP…EYTF), 136–156 (VLAA…GCTW), 165–182 (TIAA…GYST), 198–218 (PVGN…SMIA), and 250–270 (GHYT…DSLA). Catalysis depends on residues H211, H251, and D255.

It belongs to the phosphatidylcholine:diacylglycerol cholinephosphotransferase family.

Its subcellular location is the membrane. In terms of biological role, functions as a phosphatidylcholine:diacylglycerol cholinephosphotransferase that catalyzes the transfer of the phosphocholine headgroup from phosphatidylcholine (PC) to diacylglycerol, a major reaction for the transfer of 18:1 into phosphatidylcholine for desaturation and also for the reverse transfer of 18:2 and 18:3 into the triacylglycerols synthesis pathway. In Arabidopsis thaliana (Mouse-ear cress), this protein is Phosphatidylcholine:diacylglycerol cholinephosphotransferase 2.